A 251-amino-acid chain; its full sequence is Triosephosphate isomerase (251 aa).

Position 9–11 (9–11 (NWK)) interacts with substrate. His95 functions as the Electrophile in the catalytic mechanism. The Proton acceptor role is filled by Glu167. Substrate-binding positions include Gly173, Ser213, and 234-235 (GG). Ser213 carries the post-translational modification Phosphoserine.

Belongs to the triosephosphate isomerase family. In terms of assembly, homodimer.

Its subcellular location is the cytoplasm. The enzyme catalyses D-glyceraldehyde 3-phosphate = dihydroxyacetone phosphate. Its pathway is carbohydrate biosynthesis; gluconeogenesis. It participates in carbohydrate degradation; glycolysis; D-glyceraldehyde 3-phosphate from glycerone phosphate: step 1/1. Functionally, involved in the gluconeogenesis. Catalyzes stereospecifically the conversion of dihydroxyacetone phosphate (DHAP) to D-glyceraldehyde-3-phosphate (G3P). In Bacillus mycoides (strain KBAB4) (Bacillus weihenstephanensis), this protein is Triosephosphate isomerase.